A 423-amino-acid polypeptide reads, in one-letter code: Gamma-glutamyl phosphate reductase (423 aa).

It belongs to the gamma-glutamyl phosphate reductase family.

It is found in the cytoplasm. The enzyme catalyses L-glutamate 5-semialdehyde + phosphate + NADP(+) = L-glutamyl 5-phosphate + NADPH + H(+). It functions in the pathway amino-acid biosynthesis; L-proline biosynthesis; L-glutamate 5-semialdehyde from L-glutamate: step 2/2. Its function is as follows. Catalyzes the NADPH-dependent reduction of L-glutamate 5-phosphate into L-glutamate 5-semialdehyde and phosphate. The product spontaneously undergoes cyclization to form 1-pyrroline-5-carboxylate. This is Gamma-glutamyl phosphate reductase from Burkholderia ambifaria (strain ATCC BAA-244 / DSM 16087 / CCUG 44356 / LMG 19182 / AMMD) (Burkholderia cepacia (strain AMMD)).